The sequence spans 480 residues: Thyroid receptor-interacting protein 6 (480 aa).

Positions 1–12 (MSGPTWLPPKQP) are enriched in pro residues. Residues 1-43 (MSGPTWLPPKQPEPSRLPQGRSLPRGALGPPTAHGATLQPHPR) are disordered. Asymmetric dimethylarginine; alternate is present on Arg25. Arg25 carries the post-translational modification Omega-N-methylarginine; alternate. Tyr55 is subject to Phosphotyrosine; by SRC. Residues 57–84 (PPGVPEDRGPTWVGSHGTPQRLQGLPPD) form a disordered region. Residue Ser92 is modified to Phosphoserine. Positions 107 to 134 (LDGGRSHAPRRPDRQAFEAPPPHAYRGG) are disordered. Positions 108 to 122 (DGGRSHAPRRPDRQA) are enriched in basic and acidic residues. Omega-N-methylarginine is present on residues Arg111, Arg183, and Arg190. Ser193 is subject to Phosphoserine. Residues Arg209 and Arg242 each carry the omega-N-methylarginine modification. The segment at 218-257 (RSHREPGPGVPEGPSGVHIPAGGGRGGGHEPQGPLGQPPE) is disordered. A compositionally biased stretch (gly residues) spans 238–247 (AGGGRGGGHE). LIM zinc-binding domains follow at residues 281-339 (GRCG…YVAT), 341-401 (EKCS…KFAP), and 404-471 (SVCG…RIQE). An interaction with MAGI1 and PTPN13 region spans residues 473–480 (SATVTTDC).

It belongs to the zyxin/ajuba family. In terms of assembly, specifically interacts with the ligand binding domain of the thyroid receptor (TR) in the presence of thyroid hormone. Interacts (via the third LIM domain and C-terminus) with PTPN13 (via the second PDZ domain). Interacts (via the second LIM domain or via the third LIM domain plus C-terminus) with PDLIM4 (via PDZ domain). Found in a complex with PTPN13 and PDLIM4. Interacts with SVIL isoform 2. Interacts with LPAR2 but not other LPA receptors. Interacts with PRKAA2. Interacts with MAGI1. Interacts with SCRIB. In case of infection, interacts with S.typhimurium protein sseI. Post-translationally, phosphorylation at Tyr-55 by SRC is required for enhancement of lysophosphatidic acid-induced cell migration. Tyr-55 is dephosphorylated by PTPN13. In terms of tissue distribution, highly expressed in kidney, stomach, lung, heart and testis. Low expression levels in brain, colon, thymus, pancreas and skin. Not expressed in skeletal muscle.

The protein resides in the cytoplasm. Its subcellular location is the cytoskeleton. The protein localises to the cell junction. It is found in the focal adhesion. It localises to the nucleus. In terms of biological role, relays signals from the cell surface to the nucleus to weaken adherens junction and promote actin cytoskeleton reorganization and cell invasiveness. Involved in lysophosphatidic acid-induced cell adhesion and migration. Acts as a transcriptional coactivator for NF-kappa-B and JUN, and mediates the transrepression of these transcription factors induced by glucocorticoid receptor. In Mus musculus (Mouse), this protein is Thyroid receptor-interacting protein 6 (Trip6).